Here is a 162-residue protein sequence, read N- to C-terminus: Probable chemoreceptor glutamine deamidase CheD (162 aa).

The protein belongs to the CheD family.

It carries out the reaction L-glutaminyl-[protein] + H2O = L-glutamyl-[protein] + NH4(+). Functionally, probably deamidates glutamine residues to glutamate on methyl-accepting chemotaxis receptors (MCPs), playing an important role in chemotaxis. This chain is Probable chemoreceptor glutamine deamidase CheD, found in Syntrophotalea carbinolica (strain DSM 2380 / NBRC 103641 / GraBd1) (Pelobacter carbinolicus).